A 426-amino-acid chain; its full sequence is MVKLSLQCAVVDQAGSSFDVEIDDSAKVSKLKKVIKEENPATITCDAKDLQLFLAKKDDAWLDGAGAAAVELDEHGHPQGCVQMDPTLWVKNPKHFGDNFQPGEGQVHVLVVVPEGVVGSASETSKMDFVVDKVSKLYEHSVLSKRTRYVHSEMSSSKGNKLVKELKIRVTPVDAVPFTGGSPTPVEEFEWIKGRTEEQQSGRYRDYVEANIGDVLRNNKLCVFSVEKGANILSVEVPGCDVDLAGRTDMIVLSAIVQKFPHYLPHLPGVKMLIEVKREVKSASEFQALSELIAMDFIVDESVMALLTNLTNHWEFLWVSNKSNNRPIIATTTLTTPGEAFEVIRTLLAQSSTADADIMLPCLAEPVKRRKLNQMLPFIGEASGDGIRESIERYYDIASCLGPDFDMARAVARQVTRSIPTLSYFS.

The LQLFLAK domain stretch occupies residues 20-57 (VEIDDSAKVSKLKKVIKEENPATITCDAKDLQLFLAKK). Residues 59-107 (DAWLDGAGAAAVELDEHGHPQGCVQMDPTLWVKNPKHFGDNFQPGEGQV) are DWL domain. The HVLVXXP motif motif lies at 108 to 114 (HVLVVVP). Residues 115 to 426 (EGVVGSASET…RSIPTLSYFS (312 aa)) are effector domain.

Belongs to the Crinkler effector family.

It is found in the secreted. Its subcellular location is the host nucleus. Secreted effector that is critical to pathogenesis by suppressing plant immune responsess. Promotes Phytophthora infection by suppressing the H(2)O(2) accumulation and callose deposition. May induce cell death by regulating expression of cell death-related genes. This is Crinkler effector protein 4 from Phytophthora capsici.